The sequence spans 183 residues: Streptavidin (183 aa).

An N-terminal signal peptide occupies residues 1-24; it reads MRKIVVAAIAVSLTTVSITASASA. The Avidin-like domain maps to 37–159; sequence AEAGITGTWY…GHDTFTKVKP (123 aa). Tyrosine 67 and tyrosine 78 together coordinate biotin. The Cell attachment site; atypical signature appears at 83–85; that stretch reads RYD. Residues tryptophan 116, tryptophan 132, and tryptophan 144 each contribute to the biotin site.

It belongs to the avidin/streptavidin family. Homotetramer.

Its subcellular location is the secreted. In terms of biological role, the biological function of streptavidin is not known. Forms a strong non-covalent specific complex with biotin (one molecule of biotin per subunit of streptavidin). The protein is Streptavidin of Streptomyces avidinii.